We begin with the raw amino-acid sequence, 1070 residues long: TSC22 domain family protein 1 (1070 aa).

The tract at residues 1 to 98 (MHQPPESTAA…SQAQLQAQPL (98 aa)) is required for interaction with TGFBR1 and promotion of TGF-beta signaling. 5 disordered regions span residues 1-110 (MHQP…KKSG), 125-289 (ISSN…PASV), 458-487 (VTSERESTSGSSVSSSVSTRSHYTESVGSG), 604-637 (YSQAAPPVQTPLPGAPPPQQLQYGQQQPMVSTQM), and 830-858 (TSQVSSAGPSGMPSAPTNLVPPQNIAQTP). Positions 36-45 (GSASALNAAG) are enriched in low complexity. The span at 58–70 (FPPPSLLQPPPPA) shows a compositional bias: pro residues. Over residues 84-100 (SLNLLSQAQLQAQPLAP) the composition is skewed to low complexity. A compositionally biased stretch (acidic residues) spans 133–142 (EDTESYDDLD). The span at 216–240 (HPHHLHHHHHIHHGHHLQHGHHHPS) shows a compositional bias: basic residues. Positions 241–250 (HVAVASASIP) are enriched in low complexity. Positions 261 to 271 (KLSTTGSSDSI) are enriched in polar residues. Serine 263 carries the phosphoserine modification. Composition is skewed to low complexity over residues 272–289 (TPVAPTSAVSSSGSPASV) and 465–478 (TSGSSVSSSVSTRS). The segment covering 611–622 (VQTPLPGAPPPQ) has biased composition (pro residues). The segment covering 830 to 845 (TSQVSSAGPSGMPSAP) has biased composition (low complexity). The segment covering 849-858 (VPPQNIAQTP) has biased composition (polar residues). A leucine-zipper region spans residues 1003–1024 (LKEQIKELIEKNSQLEQENNLL). Residues 1034-1070 (AQFQAQLQTGSPPATTQPQGTTQPPAQPASQGSGPTA) are disordered. Over residues 1041–1070 (QTGSPPATTQPQGTTQPPAQPASQGSGPTA) the composition is skewed to low complexity.

Belongs to the TSC-22/Dip/Bun family. Forms homodimers. Forms heterodimers. Component of a complex composed of TSC22D1 (via N-terminus), TGFBR1 and TGFBR2; the interaction between TSC22D1 and TGFBR1 is inhibited by SMAD7 and promoted by TGFB1. Interacts with SMAD7; the interaction requires TGF-beta and the interaction is inhibited by TGFBR1. Interacts with TPT1/fortilin; interaction results in the destabilization of TSC22D1 protein and prevents TSC22D1-mediated apoptosis. Interacts with SMAD4 (via N-terminus). Interacts with ACVRL1/ALK1, ACVR1/ALK2, BMPR1A/ALK3, ACVR1B/ALK4, BMPR1B/ALK6, ACVR2A/ACTRII, and BMPR2. Interacts with SMAD6. Interacts with TFE3; the interaction is enhanced in the presence of TGF-beta. In terms of assembly, forms a heterodimer with TSC22D4/THG1. As to quaternary structure, forms a heterodimer with TSC22D4/THG1. Interacts with histone H1-2. Interacts with GNL3.

Its subcellular location is the cytoplasm. It localises to the nucleus. The protein localises to the cell membrane. It is found in the mitochondrion. Functionally, transcriptional repressor. Acts on the C-type natriuretic peptide (CNP) promoter. Acts to promote CASP3-mediated apoptosis. Positively regulates TGF-beta signaling by interacting with SMAD7 which inhibits binding of SMAD7 to TGFBR1, preventing recruitment of SMURF ubiquitin ligases to TGFBR1 and inhibiting SMURF-mediated ubiquitination and degradation of TGFBR1. Contributes to enhancement of TGF-beta signaling by binding to and modulating the transcription activator activity of SMAD4. Promotes TGF-beta-induced transcription of COL1A2; via its interaction with TFE3 at E-boxes in the gene proximal promoter. Plays a role in the repression of hematopoietic precursor cell growth. Promotes IL2 deprivation-induced apoptosis in T-lymphocytes, via repression of TSC22D3/GILZ transcription and activation of the caspase cascade. Its function is as follows. May act to negatively regulate TGFB3 signaling and thereby inhibit cell death in mammary gland cells. In terms of biological role, positively regulates cell death in response to TGFB3 during mammary gland involution. The chain is TSC22 domain family protein 1 from Pongo abelii (Sumatran orangutan).